We begin with the raw amino-acid sequence, 157 residues long: Small ribosomal subunit protein uS7 (157 aa).

Belongs to the universal ribosomal protein uS7 family. Part of the 30S ribosomal subunit. Contacts proteins S9 and S11.

Its function is as follows. One of the primary rRNA binding proteins, it binds directly to 16S rRNA where it nucleates assembly of the head domain of the 30S subunit. Is located at the subunit interface close to the decoding center, probably blocks exit of the E-site tRNA. This Marinomonas sp. (strain MWYL1) protein is Small ribosomal subunit protein uS7.